Consider the following 168-residue polypeptide: UPF0114 protein PC1_0431 (168 aa).

A run of 3 helical transmembrane segments spans residues 15–35 (LLAP…IKFF), 53–73 (LVLV…LVMV), and 136–156 (LMWY…MGYL).

This sequence belongs to the UPF0114 family.

The protein resides in the cell membrane. In Pectobacterium carotovorum subsp. carotovorum (strain PC1), this protein is UPF0114 protein PC1_0431.